The primary structure comprises 473 residues: Spliceosome-associated protein CWC27 homolog (473 aa).

At Ser2 the chain carries N-acetylserine. Positions 11–166 constitute a PPIase cyclophilin-type domain; the sequence is TNGKVLLKTT…NPHKIKSCEV (156 aa). Residues 177–193 are compositionally biased toward basic and acidic residues; sequence REIKRPKKEKPEEEVKK. Disordered regions lie at residues 177 to 386 and 399 to 473; these read REIK…EDQT and QAIA…KERR. A coiled-coil region spans residues 206-230; it reads SFGEEAEEEEEEVNRVSQSMKGKSK. Over residues 231–241 the composition is skewed to basic and acidic residues; sequence SSHDLLKDDPH. The segment covering 257–275 has biased composition (acidic residues); it reads GDLDDDGEDESAEYDEYVD. Composition is skewed to basic and acidic residues over residues 276-287, 305-348, and 360-372; these read GDEKNLMRERIA, EVEK…KRSE, and EYRREKQKYEALR. A coiled-coil region spans residues 307–378; the sequence is EKKSVSRSEE…EALRKQQSKK (72 aa). Ser347 carries the post-translational modification Phosphoserine. Residues 405–419 show a composition bias toward acidic residues; sequence PENDIPETEVEDDEG. Composition is skewed to basic and acidic residues over residues 426-438 and 458-473; these read QFEDKSRKVKDAS and RREESKKLMREKKERR.

The protein belongs to the cyclophilin-type PPIase family. As to quaternary structure, part of the activated spliceosome B/catalytic step 1 spliceosome, one of the forms of the spliceosome which has a well-formed active site but still cannot catalyze the branching reaction and is composed at least of 52 proteins, the U2, U5 and U6 snRNAs and the pre-mRNA. Recruited during early steps of activated spliceosome B maturation, it is probably one of the first proteins released from this complex as he matures to the spliceosome C complex. Component of the minor spliceosome, which splices U12-type introns.

It localises to the nucleus. Its function is as follows. As part of the spliceosome, plays a role in pre-mRNA splicing. Probable inactive PPIase with no peptidyl-prolyl cis-trans isomerase activity. As a component of the minor spliceosome, involved in the splicing of U12-type introns in pre-mRNAs. The polypeptide is Spliceosome-associated protein CWC27 homolog (Macaca fascicularis (Crab-eating macaque)).